We begin with the raw amino-acid sequence, 562 residues long: Methionine--tRNA ligase, mitochondrial (562 aa).

A mitochondrion-targeting transit peptide spans 1–10 (MLRSLALRTF). Positions 43-53 (FYVNAAPHLGH) match the 'HIGH' region motif. Residues 332-336 (KMSKS) carry the 'KMSKS' region motif. Residue lysine 335 coordinates ATP.

It belongs to the class-I aminoacyl-tRNA synthetase family.

The protein resides in the mitochondrion matrix. It carries out the reaction tRNA(Met) + L-methionine + ATP = L-methionyl-tRNA(Met) + AMP + diphosphate. This chain is Methionine--tRNA ligase, mitochondrial (mars2), found in Xenopus laevis (African clawed frog).